The primary structure comprises 1188 residues: AT-rich interactive domain-containing protein 5B (1188 aa).

A Glycyl lysine isopeptide (Lys-Gly) (interchain with G-Cter in SUMO2) cross-link involves residue Lys-130. Positions 251-277 (RPRKKKPCPQRRDSFSGVKDSNNNSDG) are disordered. Phosphoserine is present on Ser-264. The ARID domain occupies 318–410 (RADEQAFLVA…LILPYERFIK (93 aa)). Lys-336 is modified (N6,N6-dimethyllysine). The interval 412-611 (EEDKPLPPIK…QPPLANQNET (200 aa)) is disordered. Lys-445 is covalently cross-linked (Glycyl lysine isopeptide (Lys-Gly) (interchain with G-Cter in SUMO2)). A compositionally biased stretch (basic and acidic residues) spans 446 to 458 (HEIPKSKKEKENA). Glycyl lysine isopeptide (Lys-Gly) (interchain with G-Cter in SUMO2) cross-links involve residues Lys-494 and Lys-496. A compositionally biased stretch (polar residues) spans 597 to 609 (SFPTTQPPLANQN). Residues Lys-767, Lys-774, Lys-803, and Lys-810 each participate in a glycyl lysine isopeptide (Lys-Gly) (interchain with G-Cter in SUMO2) cross-link. 2 disordered regions span residues 846–874 (HHLH…PSHR) and 891–918 (DKKS…HKPT). Residues 847 to 866 (HLHNEQTSKYPSRDMYRESE) are compositionally biased toward basic and acidic residues. Residues Lys-893, Lys-916, Lys-920, and Lys-935 each participate in a glycyl lysine isopeptide (Lys-Gly) (interchain with G-Cter in SUMO2) cross-link. The disordered stretch occupies residues 956–978 (RVSPMTMSGPKKYPESLSRSGKP). Residues Lys-988, Lys-1000, and Lys-1013 each participate in a glycyl lysine isopeptide (Lys-Gly) (interchain with G-Cter in SUMO2) cross-link. The tract at residues 1028–1070 (ARAVSPLDPSKEVSGKEKASEQESEGSKAAHGGHSGGGSEGHK) is disordered. Phosphoserine is present on Ser-1032. Over residues 1036–1055 (PSKEVSGKEKASEQESEGSK) the composition is skewed to basic and acidic residues. Glycyl lysine isopeptide (Lys-Gly) (interchain with G-Cter in SUMO2) cross-links involve residues Lys-1055 and Lys-1070. A Phosphoserine modification is found at Ser-1133.

Belongs to the ARID5B family. Methylation at Lys-336 prevents DNA-binding. Demethylation by PHF2 promotes recruitment of the PHF2-ARID5B complex to promoters. As to expression, widely expressed, including in liver (at protein level).

It is found in the nucleus. Transcription coactivator that binds to the 5'-AATA[CT]-3' core sequence and plays a key role in adipogenesis and liver development. Acts by forming a complex with phosphorylated PHF2, which mediates demethylation at Lys-336, leading to target the PHF2-ARID5B complex to target promoters, where PHF2 mediates demethylation of dimethylated 'Lys-9' of histone H3 (H3K9me2), followed by transcription activation of target genes. The PHF2-ARID5B complex acts as a coactivator of HNF4A in liver. Required for adipogenesis: regulates triglyceride metabolism in adipocytes by regulating expression of adipogenic genes. Overexpression leads to induction of smooth muscle marker genes, suggesting that it may also act as a regulator of smooth muscle cell differentiation and proliferation. Represses the cytomegalovirus enhancer. The polypeptide is AT-rich interactive domain-containing protein 5B (ARID5B) (Homo sapiens (Human)).